The chain runs to 385 residues: Alanine--glyoxylate aminotransferase 1 (385 aa).

Lysine 201 carries the post-translational modification N6-(pyridoxal phosphate)lysine. A substrate-binding site is contributed by arginine 354.

This sequence belongs to the class-V pyridoxal-phosphate-dependent aminotransferase family. Homodimer. The cofactor is pyridoxal 5'-phosphate.

It carries out the reaction glyoxylate + L-alanine = glycine + pyruvate. It participates in amino-acid biosynthesis; glycine biosynthesis; glycine from glyoxylate: step 1/1. Has alanine:glyoxylate aminotransferase activity. The protein is Alanine--glyoxylate aminotransferase 1 of Saccharomyces cerevisiae (strain ATCC 204508 / S288c) (Baker's yeast).